A 393-amino-acid polypeptide reads, in one-letter code: Phosphoglycerate kinase (393 aa).

Substrate is bound by residues 21-23 (DLN), Arg36, 59-62 (HLGR), Arg113, and Arg146. ATP contacts are provided by residues Lys197, Glu319, and 345–348 (GGDT).

It belongs to the phosphoglycerate kinase family. As to quaternary structure, monomer.

It is found in the cytoplasm. The enzyme catalyses (2R)-3-phosphoglycerate + ATP = (2R)-3-phospho-glyceroyl phosphate + ADP. The protein operates within carbohydrate degradation; glycolysis; pyruvate from D-glyceraldehyde 3-phosphate: step 2/5. This chain is Phosphoglycerate kinase, found in Nitratidesulfovibrio vulgaris (strain ATCC 29579 / DSM 644 / CCUG 34227 / NCIMB 8303 / VKM B-1760 / Hildenborough) (Desulfovibrio vulgaris).